Here is a 321-residue protein sequence, read N- to C-terminus: Fructose-1,6-bisphosphatase class 1 (321 aa).

Residues E93, D114, L116, and D117 each contribute to the Mg(2+) site. Substrate contacts are provided by residues 117-120, N205, Y233, and K263; that span reads DGSS. Mg(2+) is bound at residue E269.

It belongs to the FBPase class 1 family. Homotetramer. Mg(2+) is required as a cofactor.

Its subcellular location is the cytoplasm. It catalyses the reaction beta-D-fructose 1,6-bisphosphate + H2O = beta-D-fructose 6-phosphate + phosphate. It participates in carbohydrate biosynthesis; gluconeogenesis. The sequence is that of Fructose-1,6-bisphosphatase class 1 from Persephonella marina (strain DSM 14350 / EX-H1).